An 809-amino-acid polypeptide reads, in one-letter code: Transitional endoplasmic reticulum ATPase homolog 1 (809 aa).

The interval 1–21 is disordered; it reads MASVPTHQSEKEKKNDELSTA. Over residues 8-21 the composition is skewed to basic and acidic residues; it reads QSEKEKKNDELSTA. ATP is bound by residues 253–259, asparagine 354, histidine 390, and 527–532; these read PGTGKTL and GCGKTL. The interval 779–809 is disordered; the sequence is FGNNFKFPGEQRGSDAPSAPVPAQDDDDLYN. Residues 803-809 are interaction with ufd-2; it reads DDDDLYN.

The protein belongs to the AAA ATPase family. CDC48 subfamily. Homohexamer; oligomerization is ATP-independent. Forms a ring-shaped particle of 18.3 nm diameter, that displays 6-fold radial symmetry. Interacts with cdc-48.2 and thus may form heterohexamers. Forms a complex composed of cdc-48.1, him-6 and crp-1; within the complex, interacts with helicase him-6 and GTPase crp-1. Forms a complex composed of deubiquitinating enzyme atx-3, adapter ubxn-5 and cdc-48.1; within the complex, interacts (via N-terminus) with ubxn-5 and with atx-3. Forms a complex composed of deubiquitinating enzyme atx-3, E4 ubiquitin-protein ligase ufd-2 and cdc-48.1; within the complex, interacts with atx-3 and (via DDDLYN motif) with ufd-2. Interacts (via N-terminus) with atx-3 (via RRDR motif); the interaction is not required for atx-3 enzymatic activity. Forms a complex composed of cdc-48.1, myosin chaperone unc-45, ubiquitin-protein ligases ufd-2 and chn-1; within the complex, interacts (via DDDLYN motif) with ufd-2 and targets myosin chaperone unc-45 for proteasomal degradation. Forms a complex composed of ubxn-3, ufd-1, npl-4.1 and cdc-48.1; within the complex, interacts (via N-terminus) with ubxn-3 (via FPK motif) and with ufd-1. Forms a complex composed of ubxn-3, cdc-48.1 and/or cdc-48.2 and substrate cdt-1. Interacts (via N-terminus) with ubxn-1. Interacts (via N-terminus) with ubxn-2. Interacts (via N-terminus) with ubxn-4. Interacts with ubxn-6. Interacts with ufd-3. Does not interact with air-2. As to expression, expressed in germ cells and spermatheca. Expressed in body wall muscles.

The protein localises to the cytoplasm. It is found in the perinuclear region. The catalysed reaction is ATP + H2O = ADP + phosphate + H(+). Its activity is regulated as follows. The first ATP-binding region has low ATPase activity. The second ATP-binding region is responsible for ATPase activity. ATP binding to the first ATP-binding region induces intrinsic activity of the second ATP-binding region. While ATP binding to the first ATP-binding region appears to prevent ATP hydrolysis by the second ATP-binding region, ADP-binding to first region promotes the coordinate and cooperative ATPase cycle of the second ATP-binding region. ATP binding to the first ATP-binding region induces a conformational change, promoting the rotation of the first ATP-binding region relative to the second ATP-binding region in the hexamer. Inhibited by N-ethylmaleimide (NEM). Its function is as follows. ATP-dependent chaperone which probably uses the energy provided by ATP hydrolysis to generate mechanical force to unfold substrate proteins, disassemble protein complexes, and disaggregate protein aggregates. Can also prevent aggregation of unfolded proteins also in an ATP-independent manner. Targets polyubiquitinated proteins for proteasomal degradation by binding to 'Lys-48'-linked polyubiquitin chains. Involved in the cytoplasmic elimination of misfolded proteins exported from the ER. This pathway, known as ERAD, prevents the activation of the unfolded protein response (UPR) caused by the accumulation of misfolded proteins in the ER. In association with helicase him-6 and GTPase crp-1, regulates the unfolded protein response (UPR) following ER stress, probably independently of the ERAD pathway. Together with udf-2 and chn-1, regulates myosin assembly in body wall muscles by targeting myosin chaperone unc-45 for proteasomal degradation. Together with the ufd-1-npl-4 complex, controls the switch from spermatogenesis to oogenesis by regulating E3 ligase cul-2 complex-mediated tra-1 proteasomal degradation. During oocyte meiosis and together with cdc-48.2, required for chromosome condensation at the diakinesis phase in prophase I and for progression of metaphase I. During the first embryonic cell division, regulates DNA replication and thus chromosome segregation and decondensation, and nuclear envelope re-assembly. In S phase and in association with ufd-1, npl-4.1 and/or npl-4.2 and ubxn-3, ensures the degradation of DNA licensing factor cdt-1 after the initiation of DNA replication and thus the disassembly of the DNA replication CMG helicase complex by promoting the dissociation from chromatin of several of its components including cdc-45 and sld-5. Regulates ubxn-3 nuclear localization during S phase. During the first embryonic cell divisions and together with cdc-48.2, regulates the re-assembly of the nuclear envelope after mitosis possibly by inactivating kinase air-2, a component of the chromosomal passenger complex (CPC). However, in another study, cdc-48.1 does not appear to be implicated in the regulation of air-2. The polypeptide is Transitional endoplasmic reticulum ATPase homolog 1 (Caenorhabditis elegans).